The primary structure comprises 177 residues: SsrA-binding protein (177 aa).

Disordered regions lie at residues 1-23 and 148-177; these read MYVPKESQPKQGGGASGKVKDGK and YDKRQTLREKQDRRESDRAIAAAKRKQRGE. Basic and acidic residues predominate over residues 148–165; sequence YDKRQTLREKQDRRESDR.

It belongs to the SmpB family.

It is found in the cytoplasm. Required for rescue of stalled ribosomes mediated by trans-translation. Binds to transfer-messenger RNA (tmRNA), required for stable association of tmRNA with ribosomes. tmRNA and SmpB together mimic tRNA shape, replacing the anticodon stem-loop with SmpB. tmRNA is encoded by the ssrA gene; the 2 termini fold to resemble tRNA(Ala) and it encodes a 'tag peptide', a short internal open reading frame. During trans-translation Ala-aminoacylated tmRNA acts like a tRNA, entering the A-site of stalled ribosomes, displacing the stalled mRNA. The ribosome then switches to translate the ORF on the tmRNA; the nascent peptide is terminated with the 'tag peptide' encoded by the tmRNA and targeted for degradation. The ribosome is freed to recommence translation, which seems to be the essential function of trans-translation. The chain is SsrA-binding protein from Streptomyces avermitilis (strain ATCC 31267 / DSM 46492 / JCM 5070 / NBRC 14893 / NCIMB 12804 / NRRL 8165 / MA-4680).